We begin with the raw amino-acid sequence, 211 residues long: Mitotic spindle assembly checkpoint protein MAD2B (211 aa).

An HORMA domain is found at 13 to 203; sequence QVVADVLCEF…SDILKMQLYV (191 aa). The segment at 21–155 is mediates interaction with REV1 and REV3L and homodimerization; it reads EFLEVAVHLI…FTVLVHTREA (135 aa). Positions 150–211 are mediates interaction with ipaB; that stretch reads VHTREAATRN…YVEERAHKGS (62 aa).

Homooligomer. Heterodimer with REV3L. This dimer forms the minimal DNA polymerase zeta complex (Pol-zeta2), with REV3L bearing DNA polymerase catalytic activity, although its activity is very low in this context. Component of the tetrameric Pol-zeta complex (Pol-zeta4), which consists of REV3L, MAD2L2, POLD2 and POLD3; Pol-zeta4 is the fully active form of DNA polymerase zeta. Component of the shieldin complex, consisting of SHLD1, SHLD2, SHLD3 and MAD2L2/REV7. Within the complex, SHLD2 forms a scaffold which interacts with a SHLD3-MAD2L2 subcomplex via its N-terminus, and with SHLD1 via its C-terminus. Interacts with REV1. Interacts with ADAM9. Interacts with CHAMP1. Interacts with FZR1 (in complex with the anaphase promoting complex APC). Interacts with CDC20; PubMed:11459825 could not detect the interaction. Interacts with RAN. Interacts with ELK1; the interaction is direct and recruits MAD2L2 to ELK1-specific promoters. May interact with the JNK kinases MAPK8 and/or MAPK9 to stimulate ELK1 phosphorylation and transcriptional activity upon DNA damage. Interacts with TCF7L2; prevents its binding to promoters and negatively modulates its transcriptional activity. Interacts with YY1AP1. Interacts with S.flexneri protein ipaB; prevents the interaction of MAD2L2 with FZR1 and CDC20 resulting in an activation of the anaphase-promoting complex APC and a cell cycle arrest. Interacts with PRCC; the interaction is direct. Interacts with POGZ. Interacts with ASTE1. As to expression, ubiquitously expressed.

It is found in the nucleus. It localises to the cytoplasm. The protein resides in the cytoskeleton. Its subcellular location is the spindle. The protein localises to the chromosome. In terms of biological role, adapter protein able to interact with different proteins and involved in different biological processes. Mediates the interaction between the error-prone DNA polymerase zeta catalytic subunit REV3L and the inserter polymerase REV1, thereby mediating the second polymerase switching in translesion DNA synthesis. Translesion DNA synthesis releases the replication blockade of replicative polymerases, stalled in presence of DNA lesions. Component of the shieldin complex, which plays an important role in repair of DNA double-stranded breaks (DSBs). During G1 and S phase of the cell cycle, the complex functions downstream of TP53BP1 to promote non-homologous end joining (NHEJ) and suppress DNA end resection. Mediates various NHEJ-dependent processes including immunoglobulin class-switch recombination, and fusion of unprotected telomeres. May also regulate another aspect of cellular response to DNA damage through regulation of the JNK-mediated phosphorylation and activation of the transcriptional activator ELK1. Inhibits the FZR1- and probably CDC20-mediated activation of the anaphase promoting complex APC thereby regulating progression through the cell cycle. Regulates TCF7L2-mediated gene transcription and may play a role in epithelial-mesenchymal transdifferentiation. This is Mitotic spindle assembly checkpoint protein MAD2B (MAD2L2) from Homo sapiens (Human).